The following is a 256-amino-acid chain: Protein FixA (256 aa).

It belongs to the ETF beta-subunit/FixA family. Heterodimer of FixA and FixB.

The protein operates within amine and polyamine metabolism; carnitine metabolism. Its function is as follows. Required for anaerobic carnitine reduction. May bring reductant to CaiA. The polypeptide is Protein FixA (Escherichia fergusonii (strain ATCC 35469 / DSM 13698 / CCUG 18766 / IAM 14443 / JCM 21226 / LMG 7866 / NBRC 102419 / NCTC 12128 / CDC 0568-73)).